Reading from the N-terminus, the 232-residue chain is LexA repressor (232 aa).

A compositionally biased stretch (polar residues) spans 1 to 10 (MDDSNDSSSA). Residues 1–22 (MDDSNDSSSAGPDGRLHAVDPS) form a disordered region. A DNA-binding region (H-T-H motif) is located at residues 47–67 (IREIGDAVGLTSTSSVAHQLR). Catalysis depends on for autocatalytic cleavage activity residues S156 and K193.

This sequence belongs to the peptidase S24 family. In terms of assembly, homodimer.

The catalysed reaction is Hydrolysis of Ala-|-Gly bond in repressor LexA.. Its function is as follows. Represses a number of genes involved in the response to DNA damage (SOS response), including recA and lexA. In the presence of single-stranded DNA, RecA interacts with LexA causing an autocatalytic cleavage which disrupts the DNA-binding part of LexA, leading to derepression of the SOS regulon and eventually DNA repair. The polypeptide is LexA repressor (Mycolicibacterium paratuberculosis (strain ATCC BAA-968 / K-10) (Mycobacterium paratuberculosis)).